A 138-amino-acid chain; its full sequence is MLAPKRVKFRKQQKGRMRGTAFRGSTLSFGDFGLKALECGYITSRQIEAARIAITRHVKRGGKVWIRFFPDKPFTKKPAETRMGKGKGSPEGWHAVIKPGRVLYEIKGVPETIAREALNLAAHKLPIPTRFVSRQDVL.

It belongs to the universal ribosomal protein uL16 family. Part of the 50S ribosomal subunit.

Binds 23S rRNA and is also seen to make contacts with the A and possibly P site tRNAs. In Syntrophobacter fumaroxidans (strain DSM 10017 / MPOB), this protein is Large ribosomal subunit protein uL16.